Consider the following 360-residue polypeptide: Photosystem II protein D1 2 (360 aa).

The next 3 membrane-spanning stretches (helical) occupy residues 29 to 46 (YVGWFGVLMIPTLLTATT), 118 to 133 (HFLIGVFCYMGREWEL), and 142 to 156 (WICVAFSAPVAAATA). Residue H118 coordinates chlorophyll a. Y126 contributes to the pheophytin a binding site. Residues D170 and E189 each contribute to the [CaMn4O5] cluster site. Residues 197-218 (FHMLGVAGVFGGSLFSAMHGSL) traverse the membrane as a helical segment. Residue H198 participates in chlorophyll a binding. A quinone-binding positions include H215 and 264-265 (SF). H215 is a binding site for Fe cation. H272 contacts Fe cation. A helical membrane pass occupies residues 274-288 (FLGAWPVVGIWFTAL). Residues H332, E333, D342, and A344 each coordinate [CaMn4O5] cluster. Residues 345 to 360 (AGEQAPVALQAPAING) constitute a propeptide that is removed on maturation.

It belongs to the reaction center PufL/M/PsbA/D family. In terms of assembly, PSII is composed of 1 copy each of membrane proteins PsbA, PsbB, PsbC, PsbD, PsbE, PsbF, PsbH, PsbI, PsbJ, PsbK, PsbL, PsbM, PsbT, PsbX, PsbY, PsbZ, Psb30/Ycf12, peripheral proteins PsbO, CyanoQ (PsbQ), PsbU, PsbV and a large number of cofactors. It forms dimeric complexes. The cofactor is The D1/D2 heterodimer binds P680, chlorophylls that are the primary electron donor of PSII, and subsequent electron acceptors. It shares a non-heme iron and each subunit binds pheophytin, quinone, additional chlorophylls, carotenoids and lipids. D1 provides most of the ligands for the Mn4-Ca-O5 cluster of the oxygen-evolving complex (OEC). There is also a Cl(-1) ion associated with D1 and D2, which is required for oxygen evolution. The PSII complex binds additional chlorophylls, carotenoids and specific lipids.. In terms of processing, tyr-161 forms a radical intermediate that is referred to as redox-active TyrZ, YZ or Y-Z. Post-translationally, C-terminally processed by CtpA; processing is essential to allow assembly of the oxygen-evolving complex and thus photosynthetic growth.

The protein localises to the cellular thylakoid membrane. The catalysed reaction is 2 a plastoquinone + 4 hnu + 2 H2O = 2 a plastoquinol + O2. Functionally, photosystem II (PSII) is a light-driven water:plastoquinone oxidoreductase that uses light energy to abstract electrons from H(2)O, generating O(2) and a proton gradient subsequently used for ATP formation. It consists of a core antenna complex that captures photons, and an electron transfer chain that converts photonic excitation into a charge separation. The D1/D2 (PsbA/PsbD) reaction center heterodimer binds P680, the primary electron donor of PSII as well as several subsequent electron acceptors. This chain is Photosystem II protein D1 2, found in Picosynechococcus sp. (strain ATCC 27264 / PCC 7002 / PR-6) (Agmenellum quadruplicatum).